Here is a 256-residue protein sequence, read N- to C-terminus: Probable ABC transporter ATP-binding protein spyM18_0273 (256 aa).

Residues 4-246 enclose the ABC transporter domain; sequence LEINNLHVSI…EKEGYAGIAQ (243 aa). ATP is bound at residue 36–43; the sequence is GPNGTGKS.

This sequence belongs to the ABC transporter superfamily. Ycf16 family.

It localises to the cell membrane. The chain is Probable ABC transporter ATP-binding protein spyM18_0273 from Streptococcus pyogenes serotype M18 (strain MGAS8232).